We begin with the raw amino-acid sequence, 521 residues long: Solute carrier family 35 member F4 (521 aa).

10 helical membrane passes run 160–180 (MVLKGIWGLLIILSVSSSWVG), 192–212 (FYCPFFMTWFSTNWNIMFFPV), 248–266 (FLKRTAPFSILWTLTNYLY), 277–297 (DVSALFCCNKAFVFLLSWIVL), 301–321 (FMGVRIVAAIMAITGIVMMAY), 330–350 (IIGVAFAVGSASTSALYKVLF), 365–385 (FVSTLGFFNLIFISFTPVILY), 395–417 (FAALPWGCLCGMAGLWLAFNILV), 419–441 (VGVVLTYPILISIGTVLSVPGNA), and 450–470 (VIFNVVRLAATIIICIGFLLM). Residues 261–321 (LTNYLYLLAL…AITGIVMMAY (61 aa)) enclose the EamA domain.

It belongs to the SLC35F solute transporter family.

It is found in the membrane. Functionally, putative solute transporter. The protein is Solute carrier family 35 member F4 (SLC35F4) of Homo sapiens (Human).